Consider the following 262-residue polypeptide: 3-methyl-2-oxobutanoate hydroxymethyltransferase (262 aa).

Residues Asp42 and Asp81 each contribute to the Mg(2+) site. 3-methyl-2-oxobutanoate-binding positions include 42-43, Asp81, and Lys110; that span reads DS. Glu112 is a Mg(2+) binding site. The active-site Proton acceptor is Glu180.

Belongs to the PanB family. As to quaternary structure, homodecamer; pentamer of dimers. It depends on Mg(2+) as a cofactor.

The protein resides in the cytoplasm. It carries out the reaction 3-methyl-2-oxobutanoate + (6R)-5,10-methylene-5,6,7,8-tetrahydrofolate + H2O = 2-dehydropantoate + (6S)-5,6,7,8-tetrahydrofolate. The protein operates within cofactor biosynthesis; (R)-pantothenate biosynthesis; (R)-pantoate from 3-methyl-2-oxobutanoate: step 1/2. Its function is as follows. Catalyzes the reversible reaction in which hydroxymethyl group from 5,10-methylenetetrahydrofolate is transferred onto alpha-ketoisovalerate to form ketopantoate. This is 3-methyl-2-oxobutanoate hydroxymethyltransferase from Legionella pneumophila (strain Corby).